The chain runs to 152 residues: Transcriptional regulator MraZ (152 aa).

2 SpoVT-AbrB domains span residues 5-52 (ASAI…PIHE) and 81-124 (AHEC…DEAA).

It belongs to the MraZ family. As to quaternary structure, forms oligomers.

The protein localises to the cytoplasm. It localises to the nucleoid. This chain is Transcriptional regulator MraZ, found in Shewanella pealeana (strain ATCC 700345 / ANG-SQ1).